Reading from the N-terminus, the 92-residue chain is Small ribosomal subunit protein uS19c (92 aa).

It belongs to the universal ribosomal protein uS19 family.

It is found in the plastid. The protein resides in the chloroplast. In terms of biological role, protein S19 forms a complex with S13 that binds strongly to the 16S ribosomal RNA. The sequence is that of Small ribosomal subunit protein uS19c from Nephroselmis olivacea (Green alga).